Here is a 1798-residue protein sequence, read N- to C-terminus: U3 small nucleolar RNA-associated protein 10 (1798 aa).

One copy of the HEAT 1 repeat lies at 583–620; the sequence is LDFQALLPFLLVTLTDPSERVRREAAAALAAVGSLYKK. A run of 2 helical transmembrane segments spans residues 942–962 and 998–1018; these read IQSG…AIVN and ALLL…HSVM. HEAT repeat units follow at residues 1042-1079, 1249-1286, 1293-1331, and 1754-1791; these read QTID…AFEH, LTLV…QNPE, IRVL…KYGK, and ALLP…VLGE.

Belongs to the HEATR1/UTP10 family. As to quaternary structure, component of the ribosomal small subunit (SSU) processome.

Its subcellular location is the nucleus. It is found in the nucleolus. It localises to the membrane. Its function is as follows. Involved in nucleolar processing of pre-18S ribosomal RNA. Involved in ribosome biosynthesis. The polypeptide is U3 small nucleolar RNA-associated protein 10 (Aspergillus fumigatus (strain ATCC MYA-4609 / CBS 101355 / FGSC A1100 / Af293) (Neosartorya fumigata)).